Here is a 576-residue protein sequence, read N- to C-terminus: Protein HYPER-SENSITIVITY-RELATED 4 (576 aa).

A helical membrane pass occupies residues 55–75 (LATAKTVLTTAASVAATAMLA). 306–313 (GPPGTGKS) serves as a coordination point for ATP. Residues 508–532 (DKAKTEKQELENKKKTKEGTDSVVK) form a disordered region.

This sequence belongs to the AAA ATPase family. BCS1 subfamily. Binds to the Yariv phenylglycoside (beta-D-Glc)(3). Mg(2+) is required as a cofactor.

The protein resides in the membrane. It carries out the reaction ATP + H2O = ADP + phosphate + H(+). The chain is Protein HYPER-SENSITIVITY-RELATED 4 from Arabidopsis thaliana (Mouse-ear cress).